A 663-amino-acid chain; its full sequence is DNA ligase (663 aa).

NAD(+) is bound by residues 33–37 (DQEFD), 82–83 (SL), and glutamate 113. The N6-AMP-lysine intermediate role is filled by lysine 115. NAD(+) contacts are provided by arginine 136, glutamate 170, lysine 286, and lysine 310. Residues cysteine 404, cysteine 407, cysteine 422, and cysteine 427 each contribute to the Zn(2+) site. Positions 587–663 (SSDPSLTGKL…IEESDLEDFL (77 aa)) constitute a BRCT domain.

It belongs to the NAD-dependent DNA ligase family. LigA subfamily. The cofactor is Mg(2+). Mn(2+) serves as cofactor.

The catalysed reaction is NAD(+) + (deoxyribonucleotide)n-3'-hydroxyl + 5'-phospho-(deoxyribonucleotide)m = (deoxyribonucleotide)n+m + AMP + beta-nicotinamide D-nucleotide.. Functionally, DNA ligase that catalyzes the formation of phosphodiester linkages between 5'-phosphoryl and 3'-hydroxyl groups in double-stranded DNA using NAD as a coenzyme and as the energy source for the reaction. It is essential for DNA replication and repair of damaged DNA. The chain is DNA ligase from Natranaerobius thermophilus (strain ATCC BAA-1301 / DSM 18059 / JW/NM-WN-LF).